The sequence spans 328 residues: METDNGKGLILAVASSVFIGSSFILKKKGLKRAGAIGTRAGYGGYTYLLEPLWWAGMVTMIVGEAANFVAYIYAPAVLVTPLGALSIIISAVLAHFLLKEKLKKMGVLGCVSCIVGSVVIVIHAPKEQTPNSVEEIWNLATQPAFLIYVAITMSIVLALILHFEPLCGQTNILVYIGICSLMGALTVMSIKAIGIAIKLTMEGVSQIGYPQTWLFVMVAVTCVVTQLIYLNKALDTFNAAIVSPVYYVMFTTLTIVASAIMFKDWSGQDAASVASELCGFITVLTGTMILHGTREEEQQQASSEHVRWYDSRKSMNEEHLVSLYSPEY.

Topologically, residues 1–4 are extracellular; that stretch reads METD. The helical transmembrane segment at 5 to 25 threads the bilayer; sequence NGKGLILAVASSVFIGSSFIL. At 26-51 the chain is on the cytoplasmic side; that stretch reads KKKGLKRAGAIGTRAGYGGYTYLLEP. Residues 52-72 traverse the membrane as a helical segment; the sequence is LWWAGMVTMIVGEAANFVAYI. The Extracellular portion of the chain corresponds to 73–76; the sequence is YAPA. A helical transmembrane segment spans residues 77–97; sequence VLVTPLGALSIIISAVLAHFL. Residues 98–104 lie on the Cytoplasmic side of the membrane; the sequence is LKEKLKK. Residues 105-125 traverse the membrane as a helical segment; sequence MGVLGCVSCIVGSVVIVIHAP. Topologically, residues 126–142 are extracellular; the sequence is KEQTPNSVEEIWNLATQ. The chain crosses the membrane as a helical span at residues 143–163; the sequence is PAFLIYVAITMSIVLALILHF. The Cytoplasmic portion of the chain corresponds to 164-175; it reads EPLCGQTNILVY. The helical transmembrane segment at 176 to 196 threads the bilayer; sequence IGICSLMGALTVMSIKAIGIA. Topologically, residues 197-209 are extracellular; sequence IKLTMEGVSQIGY. The helical transmembrane segment at 210–230 threads the bilayer; sequence PQTWLFVMVAVTCVVTQLIYL. The Cytoplasmic portion of the chain corresponds to 231–240; sequence NKALDTFNAA. A helical membrane pass occupies residues 241 to 261; the sequence is IVSPVYYVMFTTLTIVASAIM. The Extracellular segment spans residues 262–269; that stretch reads FKDWSGQD. The chain crosses the membrane as a helical span at residues 270 to 290; sequence AASVASELCGFITVLTGTMIL. Over 291–328 the chain is Cytoplasmic; sequence HGTREEEQQQASSEHVRWYDSRKSMNEEHLVSLYSPEY.

The protein belongs to the NIPA (TC 2.A.7) family. As to quaternary structure, homodimer.

The protein localises to the cell membrane. It localises to the early endosome. Its function is as follows. Acts as a Mg(2+) transporter. Can also transport other divalent cations such as Fe(2+), Sr(2+), Ba(2+), Mn(2+) and Co(2+) but to a much less extent than Mg(2+). This is Probable magnesium transporter NIPA6 from Arabidopsis thaliana (Mouse-ear cress).